A 637-amino-acid polypeptide reads, in one-letter code: DNA mismatch repair protein MutL (637 aa).

A compositionally biased stretch (polar residues) spans 343-352; that stretch reads QQSPDRQVSP. A disordered region spans residues 343 to 411; sequence QQSPDRQVSP…SARNGDVSLP (69 aa). Residues 365–380 show a composition bias toward basic and acidic residues; sequence SIERKPSVSYDVRDSH. Residues 388-397 are compositionally biased toward low complexity; that stretch reads YSSGSSSYRS.

The protein belongs to the DNA mismatch repair MutL/HexB family.

This protein is involved in the repair of mismatches in DNA. It is required for dam-dependent methyl-directed DNA mismatch repair. May act as a 'molecular matchmaker', a protein that promotes the formation of a stable complex between two or more DNA-binding proteins in an ATP-dependent manner without itself being part of a final effector complex. The chain is DNA mismatch repair protein MutL from Shewanella halifaxensis (strain HAW-EB4).